The primary structure comprises 425 residues: Serine hydroxymethyltransferase (425 aa).

Residues Leu128 and 132 to 134 (GHL) each bind (6S)-5,6,7,8-tetrahydrofolate. Lys237 is modified (N6-(pyridoxal phosphate)lysine).

It belongs to the SHMT family. As to quaternary structure, homodimer. Pyridoxal 5'-phosphate is required as a cofactor.

Its subcellular location is the cytoplasm. The catalysed reaction is (6R)-5,10-methylene-5,6,7,8-tetrahydrofolate + glycine + H2O = (6S)-5,6,7,8-tetrahydrofolate + L-serine. Its pathway is one-carbon metabolism; tetrahydrofolate interconversion. It participates in amino-acid biosynthesis; glycine biosynthesis; glycine from L-serine: step 1/1. In terms of biological role, catalyzes the reversible interconversion of serine and glycine with tetrahydrofolate (THF) serving as the one-carbon carrier. This reaction serves as the major source of one-carbon groups required for the biosynthesis of purines, thymidylate, methionine, and other important biomolecules. Also exhibits THF-independent aldolase activity toward beta-hydroxyamino acids, producing glycine and aldehydes, via a retro-aldol mechanism. The polypeptide is Serine hydroxymethyltransferase (Wolbachia pipientis subsp. Culex pipiens (strain wPip)).